A 409-amino-acid polypeptide reads, in one-letter code: Lissencephaly-1 homolog (409 aa).

A LisH domain is found at 7-39; that stretch reads QREELNQAIADYLGTNGYADSLEAFRKEADLST. A coiled-coil region spans residues 54–81; the sequence is TSVIRLQKKVMELEAKLTEAEKEVIEGA. WD repeat units follow at residues 104–145, 146–185, 189–228, 231–270, 273–332, 335–374, and 377–409; these read GHRA…RSLK, GHTD…ACVK, GHDH…CVKT, GHRE…CKVE, DHEH…CLLT, GHDN…CMKT, and AHQH…WECR.

It belongs to the WD repeat LIS1/nudF family.

Its subcellular location is the cytoplasm. It is found in the cytoskeleton. The protein localises to the microtubule organizing center. It localises to the centrosome. Positively regulates the activity of the minus-end directed microtubule motor protein dynein. May enhance dynein-mediated microtubule sliding by targeting dynein to the microtubule plus end. Required for several dynein- and microtubule-dependent processes. This is Lissencephaly-1 homolog from Drosophila willistoni (Fruit fly).